The sequence spans 607 residues: WD repeat-containing protein 1 (607 aa).

WD repeat units lie at residues 4–45 (ELKK…IRNI), 48–87 (PAIA…IWDT), 93–135 (LLKY…LWDT), 138–176 (SVGE…FFEG), 180–218 (KFKF…LYDG), 224–263 (VGNL…IWDV), 270–306 (TTFH…YLDK), 311–351 (RPLR…YWDA), 358–408 (TFTG…KMDV), 432–474 (LKDK…LYSI), 480–518 (KDEG…VFNV), 523–561 (SEQN…VWTL), and 566–604 (ARIK…QWTV).

The protein belongs to the WD repeat AIP1 family.

It is found in the cell membrane. The protein localises to the cytoplasm. Its subcellular location is the cytoskeleton. The protein resides in the nucleus. Its function is as follows. Induces disassembly of actin filaments in conjunction with ADF/cofilin family proteins. Doesn't sever actin filaments alone, but caps the barbed ends of filaments severed by cofilin, which blocks annealing and depolymerization and allows more extensive severing by cofilin. This is WD repeat-containing protein 1 from Xenopus tropicalis (Western clawed frog).